We begin with the raw amino-acid sequence, 155 residues long: Small ribosomal subunit protein uS7 (155 aa).

This sequence belongs to the universal ribosomal protein uS7 family. Part of the 30S ribosomal subunit. Contacts proteins S9 and S11.

Its function is as follows. One of the primary rRNA binding proteins, it binds directly to 16S rRNA where it nucleates assembly of the head domain of the 30S subunit. Is located at the subunit interface close to the decoding center, probably blocks exit of the E-site tRNA. The protein is Small ribosomal subunit protein uS7 of Chlorobium phaeobacteroides (strain DSM 266 / SMG 266 / 2430).